Consider the following 962-residue polypeptide: Integrator complex subunit 7 (962 aa).

Residues Ser338 and Ser809 each carry the phosphoserine modification.

The protein belongs to the Integrator subunit 7 family. In terms of assembly, component of the Integrator complex, composed of core subunits INTS1, INTS2, INTS3, INTS4, INTS5, INTS6, INTS7, INTS8, INTS9/RC74, INTS10, INTS11/CPSF3L, INTS12, INTS13, INTS14 and INTS15. The core complex associates with protein phosphatase 2A subunits PPP2CA and PPP2R1A, to form the Integrator-PP2A (INTAC) complex. Interacts with NABP2.

The protein resides in the nucleus. The protein localises to the chromosome. Its subcellular location is the cytoplasm. Component of the integrator complex, a multiprotein complex that terminates RNA polymerase II (Pol II) transcription in the promoter-proximal region of genes. The integrator complex provides a quality checkpoint during transcription elongation by driving premature transcription termination of transcripts that are unfavorably configured for transcriptional elongation: the complex terminates transcription by (1) catalyzing dephosphorylation of the C-terminal domain (CTD) of Pol II subunit POLR2A/RPB1 and SUPT5H/SPT5, (2) degrading the exiting nascent RNA transcript via endonuclease activity and (3) promoting the release of Pol II from bound DNA. The integrator complex is also involved in terminating the synthesis of non-coding Pol II transcripts, such as enhancer RNAs (eRNAs), small nuclear RNAs (snRNAs), telomerase RNAs and long non-coding RNAs (lncRNAs). May be not involved in the recruitment of cytoplasmic dynein to the nuclear envelope by different components of the INT complex. Plays a role in DNA damage response (DDR) signaling during the S phase. The polypeptide is Integrator complex subunit 7 (Homo sapiens (Human)).